The chain runs to 360 residues: 3-isopropylmalate dehydrogenase (360 aa).

Residue 76-89 (GPKWDKIERDIRPE) participates in NAD(+) binding. Substrate is bound by residues arginine 96, arginine 106, arginine 134, and aspartate 224. The Mg(2+) site is built by aspartate 224, aspartate 248, and aspartate 252. Residue 282-294 (GSAPDIAGLGIAN) coordinates NAD(+).

It belongs to the isocitrate and isopropylmalate dehydrogenases family. LeuB type 1 subfamily. In terms of assembly, homodimer. Requires Mg(2+) as cofactor. The cofactor is Mn(2+).

The protein resides in the cytoplasm. It catalyses the reaction (2R,3S)-3-isopropylmalate + NAD(+) = 4-methyl-2-oxopentanoate + CO2 + NADH. It functions in the pathway amino-acid biosynthesis; L-leucine biosynthesis; L-leucine from 3-methyl-2-oxobutanoate: step 3/4. In terms of biological role, catalyzes the oxidation of 3-carboxy-2-hydroxy-4-methylpentanoate (3-isopropylmalate) to 3-carboxy-4-methyl-2-oxopentanoate. The product decarboxylates to 4-methyl-2 oxopentanoate. In Pseudomonas putida (strain ATCC 47054 / DSM 6125 / CFBP 8728 / NCIMB 11950 / KT2440), this protein is 3-isopropylmalate dehydrogenase.